The primary structure comprises 294 residues: MKNNKVLVVVGPTAVGKTALGIDLAIKFNGEIISGDSQQVYQGLDIGTAKVTMAEQAQVPHHLIDVRKWTENFSVHDFVIEANQLIKEILDQGKVPIIVGGTGLYIQSLIEGYHLGGQENHEEMMKLREELSLLSDEELFAKVIKINPDISELNRRRAIRFLELQTFGSQDENLGSDYDFLLIGLNADRKVLYDRINQRVDQMMREGLLDEARTLYEQAPEVQAAKGIGYKEFFPYFSGDISLEEAVELVKRNSRRYAKRQLTWFKNRMSVEFEDVFSKNYPEPIFDKVTQFLN.

Residue 11–18 (GPTAVGKT) coordinates ATP. Position 13-18 (13-18 (TAVGKT)) interacts with substrate. Residues 36-39 (DSQQ) form an interaction with substrate tRNA region.

This sequence belongs to the IPP transferase family. Monomer. The cofactor is Mg(2+).

It carries out the reaction adenosine(37) in tRNA + dimethylallyl diphosphate = N(6)-dimethylallyladenosine(37) in tRNA + diphosphate. Functionally, catalyzes the transfer of a dimethylallyl group onto the adenine at position 37 in tRNAs that read codons beginning with uridine, leading to the formation of N6-(dimethylallyl)adenosine (i(6)A). This is tRNA dimethylallyltransferase from Lactococcus lactis subsp. lactis (strain IL1403) (Streptococcus lactis).